The sequence spans 342 residues: N-acetyl-gamma-glutamyl-phosphate reductase (342 aa).

Cys-147 is an active-site residue.

This sequence belongs to the NAGSA dehydrogenase family. Type 1 subfamily.

The protein resides in the cytoplasm. The catalysed reaction is N-acetyl-L-glutamate 5-semialdehyde + phosphate + NADP(+) = N-acetyl-L-glutamyl 5-phosphate + NADPH + H(+). It functions in the pathway amino-acid biosynthesis; L-arginine biosynthesis; N(2)-acetyl-L-ornithine from L-glutamate: step 3/4. In terms of biological role, catalyzes the NADPH-dependent reduction of N-acetyl-5-glutamyl phosphate to yield N-acetyl-L-glutamate 5-semialdehyde. The polypeptide is N-acetyl-gamma-glutamyl-phosphate reductase (Campylobacter jejuni subsp. jejuni serotype O:23/36 (strain 81-176)).